A 180-amino-acid polypeptide reads, in one-letter code: Trafficking protein particle complex subunit 3 (180 aa).

The S-palmitoyl cysteine moiety is linked to residue Cys-68.

The protein belongs to the TRAPP small subunits family. BET3 subfamily. In terms of assembly, homodimer. Component of the multisubunit transport protein particle (TRAPP) complex, which includes at least TRAPPC2, TRAPPC2L, TRAPPC3, TRAPPC3L, TRAPPC4, TRAPPC5, TRAPPC8, TRAPPC9, TRAPPC10, TRAPPC11 and TRAPPC12. Heterodimer with TRAPPC6A. The heterodimer TRAPPC3-TRAPPC6A interacts with TRAPPC2L. Heterodimer with TRAPPC6b. The heterodimer TRAPPC6B-TRAPPC3 interacts with TRAPPC1 likely providing a core for TRAPP complex formation.

The protein resides in the golgi apparatus. It localises to the cis-Golgi network. Its subcellular location is the endoplasmic reticulum. Functionally, may play a role in vesicular transport from endoplasmic reticulum to Golgi. The protein is Trafficking protein particle complex subunit 3 of Homo sapiens (Human).